We begin with the raw amino-acid sequence, 551 residues long: HTH-type transcriptional regulator SgrR (551 aa).

Positions 1 to 116 (MPSARLQQQF…LVSHLGRSFR (116 aa)) constitute an HTH marR-type domain. Positions 26–49 (LNELAALLSCSRRHMRTLLNTMQD) form a DNA-binding region, H-T-H motif. The interval 163-492 (ELEADIAHHW…IDWQADAARW (330 aa)) is solute-binding.

Functionally, activates the small RNA gene sgrS under glucose-phosphate stress conditions as well as yfdZ. Represses its own transcription under both stress and non-stress conditions. Might act as a sensor of the intracellular accumulation of phosphoglucose by binding these molecules in its C-terminal solute-binding domain. This chain is HTH-type transcriptional regulator SgrR, found in Escherichia coli O6:K15:H31 (strain 536 / UPEC).